The chain runs to 282 residues: MKVILAKQAGFCFGVKRATQMAFEAADKGGKTYTLGPIIHSPQVVQKLEEMGVKALKDISGMDDGTIIIRSHGVASGELEEAVRKELEIVDATCPFVKKAQEHVESLSQAGYDVVVVGDADHPEVQGIVSYASGKVYVVGSGDEAAKLPKMAKIGVVAQTTQSFENLKNVVDACLTKGGEIRVFHTICDATAVRQEEAKELASQVDCMIVIGGYNSANTKRLAEVCTELQPRTYHIEMAQQLNPRWFEGVGKVGVTAGASTPKWLIDEVLEQIEKINKDKNH.

Position 12 (cysteine 12) interacts with [4Fe-4S] cluster. (2E)-4-hydroxy-3-methylbut-2-enyl diphosphate-binding residues include histidine 40 and histidine 72. Positions 40 and 72 each coordinate dimethylallyl diphosphate. The isopentenyl diphosphate site is built by histidine 40 and histidine 72. Cysteine 94 is a [4Fe-4S] cluster binding site. Histidine 122 is a binding site for (2E)-4-hydroxy-3-methylbut-2-enyl diphosphate. Histidine 122 contacts dimethylallyl diphosphate. Residue histidine 122 participates in isopentenyl diphosphate binding. Glutamate 124 serves as the catalytic Proton donor. A (2E)-4-hydroxy-3-methylbut-2-enyl diphosphate-binding site is contributed by threonine 160. Cysteine 188 lines the [4Fe-4S] cluster pocket. Residues serine 216, asparagine 218, and serine 260 each contribute to the (2E)-4-hydroxy-3-methylbut-2-enyl diphosphate site. Residues serine 216, asparagine 218, and serine 260 each contribute to the dimethylallyl diphosphate site. Isopentenyl diphosphate is bound by residues serine 216, asparagine 218, and serine 260.

Belongs to the IspH family. The cofactor is [4Fe-4S] cluster.

The enzyme catalyses isopentenyl diphosphate + 2 oxidized [2Fe-2S]-[ferredoxin] + H2O = (2E)-4-hydroxy-3-methylbut-2-enyl diphosphate + 2 reduced [2Fe-2S]-[ferredoxin] + 2 H(+). It catalyses the reaction dimethylallyl diphosphate + 2 oxidized [2Fe-2S]-[ferredoxin] + H2O = (2E)-4-hydroxy-3-methylbut-2-enyl diphosphate + 2 reduced [2Fe-2S]-[ferredoxin] + 2 H(+). The protein operates within isoprenoid biosynthesis; dimethylallyl diphosphate biosynthesis; dimethylallyl diphosphate from (2E)-4-hydroxy-3-methylbutenyl diphosphate: step 1/1. It functions in the pathway isoprenoid biosynthesis; isopentenyl diphosphate biosynthesis via DXP pathway; isopentenyl diphosphate from 1-deoxy-D-xylulose 5-phosphate: step 6/6. Catalyzes the conversion of 1-hydroxy-2-methyl-2-(E)-butenyl 4-diphosphate (HMBPP) into a mixture of isopentenyl diphosphate (IPP) and dimethylallyl diphosphate (DMAPP). Acts in the terminal step of the DOXP/MEP pathway for isoprenoid precursor biosynthesis. This is 4-hydroxy-3-methylbut-2-enyl diphosphate reductase from Geotalea uraniireducens (strain Rf4) (Geobacter uraniireducens).